The sequence spans 342 residues: Acetoin:2,6-dichlorophenolindophenol oxidoreductase subunit beta (342 aa).

Tetramer of 2 alpha and 2 beta subunits.

Its pathway is ketone degradation; acetoin degradation. Catalyzes the 2,6-dichlorophenolindophenol-dependent cleavage of acetoin into acetate and acetaldehyde. This Bacillus subtilis (strain 168) protein is Acetoin:2,6-dichlorophenolindophenol oxidoreductase subunit beta (acoB).